A 252-amino-acid chain; its full sequence is MEEWLRKHMWPALPDHQHHPSYDILLAEPWVQFLDMTPFFRQKLYNTLSKINEMRKSCIIYPPQAEIMSWSYLCAPEDVKVVIIGQDPYHGGQANGQAFSVNKGFPVPPSLQNIFKEVRSCYPDFVSPGHGCLEEWGRQGVLLLNTILTVEAKKPGSHSDLGWTWFTNLIISTLSNKLNNCVFMLWGSKAIAKSLMINKQRHLVLKAQHPSPLAAKNNYSSSQCKFLGCGHFLTANKYLTQHNKVPIDWTLE.

Asp87 functions as the Proton acceptor in the catalytic mechanism.

It belongs to the uracil-DNA glycosylase (UDG) superfamily. UNG family.

It localises to the host nucleus. The enzyme catalyses Hydrolyzes single-stranded DNA or mismatched double-stranded DNA and polynucleotides, releasing free uracil.. Excises uracil residues from the DNA which can arise as a result of misincorporation of dUMP residues by DNA polymerase or deamination of cytosines. Therefore may reduce deleterious uracil incorporation into the viral genome, particularly in terminally differentiated cells which lack DNA repair enzymes. This Alcelaphine herpesvirus 1 (strain C500) (AlHV-1) protein is Uracil-DNA glycosylase (46).